Here is a 304-residue protein sequence, read N- to C-terminus: Uricase (304 aa).

Alanine 2 is subject to N-acetylalanine. 2 positions are modified to N6-acetyllysine; alternate: lysine 10 and lysine 23. An N6-succinyllysine; alternate mark is found at lysine 10 and lysine 23. Lysine 23 serves as the catalytic Charge relay system. N6-acetyllysine is present on residues lysine 27 and lysine 36. Phosphoserine is present on residues serine 39 and serine 63. The Charge relay system role is filled by threonine 68. Residues threonine 68 and aspartate 69 each contribute to the urate site. Lysine 118, lysine 122, and lysine 164 each carry N6-acetyllysine. Phenylalanine 170 contacts urate. Lysine 175 and lysine 185 each carry N6-acetyllysine. Arginine 187 lines the urate pocket. N6-acetyllysine; alternate is present on residues lysine 221 and lysine 228. N6-succinyllysine; alternate is present on residues lysine 221 and lysine 228. Position 232 is a phosphoserine (serine 232). Urate contacts are provided by valine 235, glutamine 236, and asparagine 262. Residue histidine 264 is the Charge relay system of the active site. Lysine 278 bears the N6-acetyllysine mark. Tyrosine 289 is subject to Phosphotyrosine. The Microbody targeting signal signature appears at 302–304; it reads SKL.

This sequence belongs to the uricase family.

The protein localises to the peroxisome. The enzyme catalyses urate + O2 + H2O = 5-hydroxyisourate + H2O2. It functions in the pathway purine metabolism; urate degradation; (S)-allantoin from urate: step 1/3. Functionally, catalyzes the oxidation of uric acid to 5-hydroxyisourate, which is further processed to form (S)-allantoin. This chain is Uricase (UOX), found in Canis lupus familiaris (Dog).